The chain runs to 315 residues: tRNA dimethylallyltransferase (315 aa).

11-18 (GPTASGKS) serves as a coordination point for ATP. 13–18 (TASGKS) provides a ligand contact to substrate. Interaction with substrate tRNA regions lie at residues 36–39 (DSMQ) and 160–164 (QRLIR).

It belongs to the IPP transferase family. Monomer. Requires Mg(2+) as cofactor.

It catalyses the reaction adenosine(37) in tRNA + dimethylallyl diphosphate = N(6)-dimethylallyladenosine(37) in tRNA + diphosphate. Catalyzes the transfer of a dimethylallyl group onto the adenine at position 37 in tRNAs that read codons beginning with uridine, leading to the formation of N6-(dimethylallyl)adenosine (i(6)A). This chain is tRNA dimethylallyltransferase, found in Rickettsia bellii (strain RML369-C).